A 1645-amino-acid chain; its full sequence is Cortactin-binding protein 2 (1645 aa).

Disordered regions lie at residues 1-28, 269-293, 366-435, 451-478, and 492-612; these read MATDGASCEPDFSRAPEDAEGATAEAAK, LKRGNDSKPSLSLPRKTKDRRSVSI, IVSS…AALH, GNANDPDQNGNTTQSPPSRDVSPTSRDS, and ALSR…PPKP. A coiled-coil region spans residues 119–276; the sequence is RKMQERMSTQ…EQLKRGNDSK (158 aa). Composition is skewed to polar residues over residues 407 to 417 and 451 to 477; these read QTPTIAPQSHA and GNANDPDQNGNTTQSPPSRDVSPTSRD. An Asymmetric dimethylarginine modification is found at arginine 495. Residues 580-590 are compositionally biased toward polar residues; that stretch reads TMASPPSTLPQ. ANK repeat units follow at residues 706–736, 740–769, 773–802, 806–835, 839–868, and 909–939; these read GRPTLLQQAAAQGNVTLLSMLLNEEGLDINY, DGHSALYSAAKNGHTDCVRLLLNAEAQVNA, NGFTPLCAAAAQGHFKCVELLIAYNANINH, EGQTPLYLACKNGNKECIKHLLEAGTDRSV, DGWTPVHAAVDAGNVDSLKLLMYHRAPARR, and EGWTAAHIAASKGFKDCLEILCKHRGLEPER. The disordered stretch occupies residues 868-898; sequence RNSLHEEEPESGVFDLDQGEESPEGTSKPVI. A disordered region spans residues 1442–1479; that stretch reads CSRKKGESGAWRKVSTSPRKKSGRFSPPSWSKPGPSEE. The residue at position 1521 (serine 1521) is a Phosphoserine. The tract at residues 1551–1645 is disordered; that stretch reads DDLRSFDSPG…EINNNSKEEI (95 aa). Composition is skewed to polar residues over residues 1558 to 1569 and 1582 to 1597; these read SPGNSPAFSATV and PFSSHQPTECSNSQSK. Over residues 1620 to 1634 the composition is skewed to low complexity; the sequence is SQNTKRSSSSSNTRQ. The segment covering 1635-1645 has biased composition (polar residues); it reads IEINNNSKEEI.

Interacts with CTTN/cortactin SH3 domain. Interacts with STRN, STRN4/zinedin and MOB4/phocein; this interactions mediate the association with the STRIPAK core complex and may regulate dendritic spine distribution of the STRIPAK complex in hippocampal neurons. Activation of glutamate receptors weakens the interaction with STRN and STRN4.

It localises to the cytoplasm. The protein resides in the cell cortex. The protein localises to the cell projection. It is found in the dendritic spine. In terms of biological role, regulates the dendritic spine distribution of CTTN/cortactin in hippocampal neurons, and thus controls dendritic spinogenesis and dendritic spine maintenance. Associates with the striatin-interacting phosphatase and kinase (STRIPAK) core complex to regulate dendritic spine distribution of the STRIPAK complex in hippocampal neurons. This chain is Cortactin-binding protein 2 (CTTNBP2), found in Mustela putorius furo (European domestic ferret).